We begin with the raw amino-acid sequence, 253 residues long: Probable transcriptional regulatory protein SynRCC307_1833 (253 aa).

Belongs to the TACO1 family.

Its subcellular location is the cytoplasm. This is Probable transcriptional regulatory protein SynRCC307_1833 from Synechococcus sp. (strain RCC307).